The chain runs to 137 residues: Nucleoside diphosphate kinase (137 aa).

Positions 9, 57, 85, 91, 102, and 112 each coordinate ATP. His115 functions as the Pros-phosphohistidine intermediate in the catalytic mechanism.

The protein belongs to the NDK family. Homotetramer. The cofactor is Mg(2+).

The protein resides in the cytoplasm. It carries out the reaction a 2'-deoxyribonucleoside 5'-diphosphate + ATP = a 2'-deoxyribonucleoside 5'-triphosphate + ADP. It catalyses the reaction a ribonucleoside 5'-diphosphate + ATP = a ribonucleoside 5'-triphosphate + ADP. In terms of biological role, major role in the synthesis of nucleoside triphosphates other than ATP. The ATP gamma phosphate is transferred to the NDP beta phosphate via a ping-pong mechanism, using a phosphorylated active-site intermediate. This Geobacter sp. (strain M21) protein is Nucleoside diphosphate kinase.